The primary structure comprises 135 residues: S-protein homolog 7 (135 aa).

An N-terminal signal peptide occupies residues 1–20 (MNNLFVLVIIIVLSAGSNNG).

It belongs to the plant self-incompatibility (S1) protein family.

It is found in the secreted. This is S-protein homolog 7 from Arabidopsis thaliana (Mouse-ear cress).